A 220-amino-acid polypeptide reads, in one-letter code: Large ribosomal subunit protein eL15 (220 aa).

Residues 197-207 (KKRHEASRGAR) are compositionally biased toward basic and acidic residues. The interval 197-220 (KKRHEASRGARDPWQIAEKLKEEK) is disordered.

The protein belongs to the eukaryotic ribosomal protein eL15 family.

The chain is Large ribosomal subunit protein eL15 from Desulfurococcus amylolyticus (strain DSM 18924 / JCM 16383 / VKM B-2413 / 1221n) (Desulfurococcus kamchatkensis).